The chain runs to 93 residues: Large ribosomal subunit protein uL23cz/uL23cy (93 aa).

This sequence belongs to the universal ribosomal protein uL23 family. In terms of assembly, part of the 50S ribosomal subunit.

Its subcellular location is the plastid. The protein localises to the chloroplast. In terms of biological role, binds to 23S rRNA. This Phaseolus angularis (Azuki bean) protein is Large ribosomal subunit protein uL23cz/uL23cy (rpl23-A).